A 182-amino-acid chain; its full sequence is Isopentenyl-diphosphate Delta-isomerase (182 aa).

H25 and H32 together coordinate Mn(2+). One can recognise a Nudix hydrolase domain in the interval 30-164 (LLHLAFSSWL…PWAFSPWMVM (135 aa)). The active site involves C67. H69 contributes to the Mn(2+) binding site. Residue E87 coordinates Mg(2+). Mn(2+) contacts are provided by E114 and E116. E116 is an active-site residue.

It belongs to the IPP isomerase type 1 family. As to quaternary structure, homodimer. Mg(2+) serves as cofactor. The cofactor is Mn(2+).

The protein resides in the cytoplasm. The catalysed reaction is isopentenyl diphosphate = dimethylallyl diphosphate. Its pathway is isoprenoid biosynthesis; dimethylallyl diphosphate biosynthesis; dimethylallyl diphosphate from isopentenyl diphosphate: step 1/1. Catalyzes the 1,3-allylic rearrangement of the homoallylic substrate isopentenyl (IPP) to its highly electrophilic allylic isomer, dimethylallyl diphosphate (DMAPP). The protein is Isopentenyl-diphosphate Delta-isomerase of Shigella flexneri serotype 5b (strain 8401).